The sequence spans 122 residues: Large ribosomal subunit protein uL14 (122 aa).

It belongs to the universal ribosomal protein uL14 family. In terms of assembly, part of the 50S ribosomal subunit. Forms a cluster with proteins L3 and L19. In the 70S ribosome, L14 and L19 interact and together make contacts with the 16S rRNA in bridges B5 and B8.

Binds to 23S rRNA. Forms part of two intersubunit bridges in the 70S ribosome. The protein is Large ribosomal subunit protein uL14 of Trichodesmium erythraeum (strain IMS101).